Reading from the N-terminus, the 337-residue chain is Eukaryotic translation initiation factor 3 subunit I (337 aa).

WD repeat units lie at residues 8-47, 50-91, 147-186, 191-230, and 288-327; these read GHER…RLGT, GHQG…KVWD, CTES…QLEN, EFDH…ILKT, and GHFG…FDFM.

It belongs to the eIF-3 subunit I family. In terms of assembly, component of the eukaryotic translation initiation factor 3 (eIF-3) complex.

It is found in the cytoplasm. Its function is as follows. Component of the eukaryotic translation initiation factor 3 (eIF-3) complex, which is involved in protein synthesis of a specialized repertoire of mRNAs and, together with other initiation factors, stimulates binding of mRNA and methionyl-tRNAi to the 40S ribosome. The eIF-3 complex specifically targets and initiates translation of a subset of mRNAs involved in cell proliferation. The polypeptide is Eukaryotic translation initiation factor 3 subunit I (tif34) (Aspergillus niger (strain ATCC MYA-4892 / CBS 513.88 / FGSC A1513)).